We begin with the raw amino-acid sequence, 206 residues long: Small ribosomal subunit protein uS4 (206 aa).

The S4 RNA-binding domain occupies 96-156 (CRLDNVVYRM…EKAKNQLRIV (61 aa)).

The protein belongs to the universal ribosomal protein uS4 family. In terms of assembly, part of the 30S ribosomal subunit. Contacts protein S5. The interaction surface between S4 and S5 is involved in control of translational fidelity.

In terms of biological role, one of the primary rRNA binding proteins, it binds directly to 16S rRNA where it nucleates assembly of the body of the 30S subunit. Its function is as follows. With S5 and S12 plays an important role in translational accuracy. This is Small ribosomal subunit protein uS4 from Pseudomonas fluorescens (strain Pf0-1).